The chain runs to 666 residues: UvrABC system protein B (666 aa).

A Helicase ATP-binding domain is found at Asp-26–Thr-414. Gly-39–Thr-46 serves as a coordination point for ATP. A Beta-hairpin motif is present at residues Tyr-92 to Ile-115. The region spanning Gln-429–Val-591 is the Helicase C-terminal domain. In terms of domain architecture, UVR spans Glu-625–Glu-660.

The protein belongs to the UvrB family. As to quaternary structure, forms a heterotetramer with UvrA during the search for lesions. Interacts with UvrC in an incision complex.

It is found in the cytoplasm. Its function is as follows. The UvrABC repair system catalyzes the recognition and processing of DNA lesions. A damage recognition complex composed of 2 UvrA and 2 UvrB subunits scans DNA for abnormalities. Upon binding of the UvrA(2)B(2) complex to a putative damaged site, the DNA wraps around one UvrB monomer. DNA wrap is dependent on ATP binding by UvrB and probably causes local melting of the DNA helix, facilitating insertion of UvrB beta-hairpin between the DNA strands. Then UvrB probes one DNA strand for the presence of a lesion. If a lesion is found the UvrA subunits dissociate and the UvrB-DNA preincision complex is formed. This complex is subsequently bound by UvrC and the second UvrB is released. If no lesion is found, the DNA wraps around the other UvrB subunit that will check the other stand for damage. This Leptospira interrogans serogroup Icterohaemorrhagiae serovar copenhageni (strain Fiocruz L1-130) protein is UvrABC system protein B.